We begin with the raw amino-acid sequence, 891 residues long: Nitrate reductase [NAD(P)H] (891 aa).

Residues 1 to 78 form a disordered region; it reads MAASVEYNRQ…VKDPRDEATS (78 aa). Residues 63 to 76 show a composition bias toward basic and acidic residues; that stretch reads LDVEPSVKDPRDEA. Mo-molybdopterin is bound at residue Cys-168. Positions 515-590 constitute a Cytochrome b5 heme-binding domain; sequence SAQFTMSEVR…LEMYRVGELI (76 aa). Residues His-550 and His-573 each coordinate heme. The FAD-binding FR-type domain occupies 630 to 742; that stretch reads REKVRCRLVD…KGPVGHIEYA (113 aa). Residues 682-685, 699-703, Phe-704, Phe-711, 716-718, and Thr-769 each bind FAD; these read RAYT, LIKIY, and LMS.

The protein belongs to the nitrate reductase family. In terms of assembly, homodimer. Requires FAD as cofactor. The cofactor is heme. Mo-molybdopterin is required as a cofactor.

The enzyme catalyses nitrite + NAD(+) + H2O = nitrate + NADH + H(+). It carries out the reaction nitrite + NADP(+) + H2O = nitrate + NADPH + H(+). Functionally, nitrate reductase is a key enzyme involved in the first step of nitrate assimilation in plants, fungi and bacteria. The chain is Nitrate reductase [NAD(P)H] (NAR-7) from Hordeum vulgare (Barley).